Reading from the N-terminus, the 274-residue chain is Malonyl-[acyl-carrier protein] O-methyltransferase (274 aa).

It belongs to the methyltransferase superfamily.

It carries out the reaction malonyl-[ACP] + S-adenosyl-L-methionine = malonyl-[ACP] methyl ester + S-adenosyl-L-homocysteine. It participates in cofactor biosynthesis; biotin biosynthesis. Converts the free carboxyl group of a malonyl-thioester to its methyl ester by transfer of a methyl group from S-adenosyl-L-methionine (SAM). It allows to synthesize pimeloyl-ACP via the fatty acid synthetic pathway. This chain is Malonyl-[acyl-carrier protein] O-methyltransferase, found in Priestia megaterium (strain DSM 319 / IMG 1521) (Bacillus megaterium).